The primary structure comprises 404 residues: Serine/threonine transporter SstT (404 aa).

The next 9 helical transmembrane spans lie at Ile17–Ile37, Phe44–Ile64, Met75–Ile95, Ala138–Leu158, Ile179–Val199, Leu212–Leu232, Ile287–Leu307, Phe319–Val339, and Phe354–Ile374.

Belongs to the dicarboxylate/amino acid:cation symporter (DAACS) (TC 2.A.23) family.

It localises to the cell membrane. The enzyme catalyses L-serine(in) + Na(+)(in) = L-serine(out) + Na(+)(out). The catalysed reaction is L-threonine(in) + Na(+)(in) = L-threonine(out) + Na(+)(out). Its function is as follows. Involved in the import of serine and threonine into the cell, with the concomitant import of sodium (symport system). This is Serine/threonine transporter SstT from Streptococcus equi subsp. zooepidemicus (strain H70).